The primary structure comprises 469 residues: Protein apterous (469 aa).

Disordered regions lie at residues 21–44 (GPGAREKSPTPPVAHQGSNQCGSA) and 111–141 (EVSDETTSGISFKTEPFGPPSSPESTSDSKI). LIM zinc-binding domains lie at 148–200 (CSGC…CKND) and 210–263 (CSRC…CRTH). A DNA-binding region (homeobox) is located at residues 367 to 426 (TKRMRTSFKHHQLRTMKSYFAINHNPDAKDLKQLSQKTGLPKRVLQVWFQNARAKWRRMM).

As to expression, expressed in PNS and CNS.

The protein resides in the nucleus. Required for the normal development of the wing and halter imaginal disks. The protein is Protein apterous (ap) of Drosophila melanogaster (Fruit fly).